The sequence spans 615 residues: Matrix metalloproteinase-25 (615 aa).

Positions Met-1–Arg-162 are excised as a propeptide. The helical transmembrane segment at Ile-53–Pro-73 threads the bilayer. A Cysteine switch motif is present at residues Pro-143–Val-150. 2 residues coordinate Zn(2+): Cys-145 and His-287. Glu-288 is a catalytic residue. Zn(2+) is bound by residues His-291 and His-297. Residues Val-336–Pro-366 form a disordered region. The span at Leu-349–Pro-366 shows a compositional bias: pro residues. 4 Hemopexin repeats span residues Pro-368–Leu-417, Val-421–Pro-466, Gly-467–Pro-515, and Phe-516–Cys-562. Cys-371 and Cys-562 are oxidised to a cystine. The disordered stretch occupies residues Ala-547–Arg-582. Residue Ala-593 is the site of GPI-anchor amidated alanine attachment. The propeptide at Ser-594–Tyr-615 is removed in mature form.

This sequence belongs to the peptidase M10A family. Requires Zn(2+) as cofactor. It depends on Ca(2+) as a cofactor. Post-translationally, the precursor is cleaved by a furin endopeptidase.

It localises to the cell membrane. May activate progelatinase A. This Mus musculus (Mouse) protein is Matrix metalloproteinase-25 (Mmp25).